The sequence spans 140 residues: 3-hydroxyacyl-[acyl-carrier-protein] dehydratase FabZ (140 aa).

The active site involves His47.

The protein belongs to the thioester dehydratase family. FabZ subfamily.

It is found in the cytoplasm. It carries out the reaction a (3R)-hydroxyacyl-[ACP] = a (2E)-enoyl-[ACP] + H2O. In terms of biological role, involved in unsaturated fatty acids biosynthesis. Catalyzes the dehydration of short chain beta-hydroxyacyl-ACPs and long chain saturated and unsaturated beta-hydroxyacyl-ACPs. This is 3-hydroxyacyl-[acyl-carrier-protein] dehydratase FabZ from Streptococcus pneumoniae (strain 70585).